The primary structure comprises 170 residues: Putative pre-16S rRNA nuclease (170 aa).

The tract at residues 1–29 (MVAASHRSPDRPGDPEGLEPGTGRGRRLG) is disordered.

It belongs to the YqgF nuclease family.

The protein localises to the cytoplasm. In terms of biological role, could be a nuclease involved in processing of the 5'-end of pre-16S rRNA. This Mycobacterium ulcerans (strain Agy99) protein is Putative pre-16S rRNA nuclease.